The chain runs to 181 residues: MGYEKPQIRSTTVIGIIRDGKAALGSDGQMTLGNTVMKHSTRKIRSLYQGRFITGFAGATADALTLLDRFESKLEAYSGKLDRAAVELAKDWRTDKYLRRLEAMLAVVSTDKALIISGTGDVIEPEDGIVAIGSGSMYALAAARSLMKHTTLSAEEIVRESLQIAADICIYTNDHIVIETL.

The active site involves Thr-11. Na(+)-binding residues include Ala-166, Cys-169, and Thr-172.

Belongs to the peptidase T1B family. HslV subfamily. In terms of assembly, a double ring-shaped homohexamer of HslV is capped on each side by a ring-shaped HslU homohexamer. The assembly of the HslU/HslV complex is dependent on binding of ATP.

It localises to the cytoplasm. The enzyme catalyses ATP-dependent cleavage of peptide bonds with broad specificity.. Allosterically activated by HslU binding. Protease subunit of a proteasome-like degradation complex believed to be a general protein degrading machinery. This Chlorobaculum tepidum (strain ATCC 49652 / DSM 12025 / NBRC 103806 / TLS) (Chlorobium tepidum) protein is ATP-dependent protease subunit HslV.